A 495-amino-acid polypeptide reads, in one-letter code: ESX-2 secretion system ATPase EccB2 (495 aa).

The chain crosses the membrane as a helical span at residues 43–63 (LALSMVLVAIAAGWMMLLNVL).

It belongs to the EccB family. Part of the ESX-2 / type VII secretion system (T7SS), which is composed of cytosolic and membrane components.

Its subcellular location is the cell membrane. Functionally, an ATPase. The sequence is that of ESX-2 secretion system ATPase EccB2 (eccB2) from Mycobacterium tuberculosis (strain CDC 1551 / Oshkosh).